The chain runs to 302 residues: Mitochondrial adapter protein MCP1 (302 aa).

Residues 1–35 (MIKLHEVPPEPVDPASLPHDVNAHSPEGDGNPDKR) are disordered. The Cytoplasmic segment spans residues 1–61 (MIKLHEVPPE…RFLWNCQKIS (61 aa)). Residues 4-12 (LHEVPPEPV) carry the PxP motif. The helical transmembrane segment at 62-82 (VLPMALYFPLHAANTLITPAV) threads the bilayer. Residues 83-100 (SPDSAPDDVLMMVREILP) are Mitochondrial intermembrane-facing. A helical membrane pass occupies residues 101 to 121 (SITTKLLVAGITLHVSAGVLL). The Cytoplasmic portion of the chain corresponds to 122 to 173 (RIVNNWNKPRRNRHRHLKISAEQDLSQDSIGLTGGISGYLFGLYKTFRIPPQ). A helical membrane pass occupies residues 174 to 194 (VISGYILVPVLIYHLLIMKWV). At 195 to 219 (PNSISTEVDFASIKQLLSSKNRWWK) the chain is on the mitochondrial intermembrane side. The chain crosses the membrane as a helical span at residues 220 to 240 (WLGGLVPLAILLESGVYHIGS). Topologically, residues 241 to 258 (GLCRYFGVRKMTSRKKWS) are cytoplasmic. Residues 259 to 276 (TAINLLTLVGFVSLIRLM) form a helical membrane-spanning segment. The Mitochondrial intermembrane portion of the chain corresponds to 277-302 (KEDSTKLGPNQFESIFKKIRLLLHVN).

As to quaternary structure, interacts (via PxP motif) with VPS13 (via SHR-BD domain).

The protein localises to the mitochondrion outer membrane. Recruits the lipid transfer protein Vps13 to mitochondria thereby promoting vacuole-mitochondria contacts. Involved in mitochondrial lipid homeostasis. The protein is Mitochondrial adapter protein MCP1 of Saccharomyces cerevisiae (strain ATCC 204508 / S288c) (Baker's yeast).